The following is a 294-amino-acid chain: Beta-lactamase (294 aa).

A signal peptide spans 1 to 30 (MKHSSLRRSLLLAGITLPLVSFALPAWANA). Residue Ser75 is the Acyl-ester intermediate of the active site. Position 239–241 (239–241 (KTG)) interacts with substrate.

The protein belongs to the class-A beta-lactamase family.

The enzyme catalyses a beta-lactam + H2O = a substituted beta-amino acid. The chain is Beta-lactamase (blaA) from Yersinia enterocolitica.